A 365-amino-acid polypeptide reads, in one-letter code: Cobalt-precorrin-5B C(1)-methyltransferase (365 aa).

Belongs to the CbiD family.

The catalysed reaction is Co-precorrin-5B + S-adenosyl-L-methionine = Co-precorrin-6A + S-adenosyl-L-homocysteine. It functions in the pathway cofactor biosynthesis; adenosylcobalamin biosynthesis; cob(II)yrinate a,c-diamide from sirohydrochlorin (anaerobic route): step 6/10. In terms of biological role, catalyzes the methylation of C-1 in cobalt-precorrin-5B to form cobalt-precorrin-6A. In Polaromonas naphthalenivorans (strain CJ2), this protein is Cobalt-precorrin-5B C(1)-methyltransferase.